The following is a 1112-amino-acid chain: Constitutive coactivator of PPAR-gamma-like protein 1 (1112 aa).

An interaction with YES1, SRC and FYN region spans residues 339–403 (PPHYLARPNP…YSLSEPALTL (65 aa)). Residues 372–525 (QAKPAVPQVP…GKGSHMGTVQ (154 aa)) form a disordered region. Polar residues-rich tracts occupy residues 403–418 (LDTS…SYSN) and 433–445 (SPIN…SPNH). Residues 479–500 (GWEKTGSHAEPLARGDPGDQVK) show a composition bias toward basic and acidic residues. Over residues 503–512 (GSSTASSGSQ) the composition is skewed to polar residues. T653 is modified (phosphothreonine). The segment at 827-1112 (AEQAAKVEKM…LEAAVLNKEE (286 aa)) is RNA binding. Omega-N-methylarginine occurs at positions 871, 882, and 884. Residues 919-943 (AFSGSDSSRTSKSQGGVQPIPSQGG) are disordered. The span at 922–934 (GSDSSRTSKSQGG) shows a compositional bias: polar residues. Residue K930 is modified to N6-acetyllysine. S958 carries the phosphoserine modification. Residues R980 and R984 each carry the omega-N-methylarginine modification. A phosphoserine mark is found at S1021 and S1042. A disordered region spans residues 1030–1090 (KSKSGESKSS…PCNTNPHLNA (61 aa)). The segment covering 1070–1090 (HSESALNNDSKPCNTNPHLNA) has biased composition (polar residues).

Belongs to the constitutive coactivator of PPAR-gamma family. In terms of assembly, interacts with PURA. Interacts with SRC family protein kinases YES1, SRC and FYN. Upon tyrosine phosphorylation, interacts with PIK3R1. Interacts with IGF2BP1/IMP-1 in an RNA-dependent manner. In terms of processing, arg-980 is dimethylated, probably to asymmetric dimethylarginine. Post-translationally, phosphorylated on tyrosine by src family kinases upon ultraviolet exposure. In terms of tissue distribution, in the brain, predominantly expressed in the hippocampus, caudate putamen, cerebral cortex and cerebellum. Expression is restricted to neurons (at protein level).

It localises to the cytoplasm. The protein localises to the cell membrane. Functionally, component of the oxidative stress-induced survival signaling. May regulate the activation of SRC family protein kinases. May act as a scaffolding protein enabling SRC family protein kinases to phosphorylate and activate PI3-kinase. Binds IGF2 RNA and promotes the production of IGF2 protein. The chain is Constitutive coactivator of PPAR-gamma-like protein 1 (FAM120A) from Mus musculus (Mouse).